An 80-amino-acid polypeptide reads, in one-letter code: Raniseptin-5 (80 aa).

The first 22 residues, 1-22 (MAFLKKSLFLVLFLGIVSLSIC), serve as a signal peptide directing secretion. Positions 23–49 (EEEKREGEEEEKQEEENEELSEEELRE) are excised as a propeptide.

Belongs to the frog skin active peptide (FSAP) family. Dermaseptin subfamily. As to expression, expressed by the skin glands.

It is found in the secreted. In terms of biological role, has antibacterial activity. The sequence is that of Raniseptin-5 from Boana raniceps (Chaco tree frog).